Consider the following 90-residue polypeptide: Small ribosomal subunit protein bS18 (90 aa).

Residues 1–24 (MKPMRQKPGRGQGNKSISNALASK) are disordered.

This sequence belongs to the bacterial ribosomal protein bS18 family. Part of the 30S ribosomal subunit. Forms a tight heterodimer with protein bS6.

Functionally, binds as a heterodimer with protein bS6 to the central domain of the 16S rRNA, where it helps stabilize the platform of the 30S subunit. This Chlorobium phaeovibrioides (strain DSM 265 / 1930) (Prosthecochloris vibrioformis (strain DSM 265)) protein is Small ribosomal subunit protein bS18.